We begin with the raw amino-acid sequence, 301 residues long: Phosphatidylglycerol--prolipoprotein diacylglyceryl transferase (301 aa).

3 helical membrane passes run 17–37 (LAVRWYGLMYLVAFIAAIVVG), 59–79 (MLFYGVLGTILGGRLGYVLFY), and 97–117 (GGMSFHGGFLGVTLAMVLFAY). Arg-142 contributes to the a 1,2-diacyl-sn-glycero-3-phospho-(1'-sn-glycerol) binding site. Helical transmembrane passes span 230-250 (MGAISAVFLIGYGLARFTVEF) and 265-285 (LSMGQWLSLPMILVGIGLLVW).

This sequence belongs to the Lgt family.

The protein resides in the cell inner membrane. The catalysed reaction is L-cysteinyl-[prolipoprotein] + a 1,2-diacyl-sn-glycero-3-phospho-(1'-sn-glycerol) = an S-1,2-diacyl-sn-glyceryl-L-cysteinyl-[prolipoprotein] + sn-glycerol 1-phosphate + H(+). It participates in protein modification; lipoprotein biosynthesis (diacylglyceryl transfer). In terms of biological role, catalyzes the transfer of the diacylglyceryl group from phosphatidylglycerol to the sulfhydryl group of the N-terminal cysteine of a prolipoprotein, the first step in the formation of mature lipoproteins. In Paraburkholderia xenovorans (strain LB400), this protein is Phosphatidylglycerol--prolipoprotein diacylglyceryl transferase.